Reading from the N-terminus, the 340-residue chain is Adenosine deaminase (340 aa).

The Zn(2+) site is built by His-15 and His-17. The substrate site is built by His-17, Asp-19, and Gly-172. His-199 provides a ligand contact to Zn(2+). Glu-202 (proton donor) is an active-site residue. Position 279 (Asp-279) interacts with Zn(2+).

Belongs to the metallo-dependent hydrolases superfamily. Adenosine and AMP deaminases family. Adenosine deaminase subfamily. Zn(2+) is required as a cofactor.

The enzyme catalyses adenosine + H2O + H(+) = inosine + NH4(+). It catalyses the reaction 2'-deoxyadenosine + H2O + H(+) = 2'-deoxyinosine + NH4(+). Its function is as follows. Catalyzes the hydrolytic deamination of adenosine and 2-deoxyadenosine. The protein is Adenosine deaminase of Streptococcus agalactiae serotype III (strain NEM316).